The following is a 70-amino-acid chain: UPF0352 protein PBPRA2586 (70 aa).

The protein belongs to the UPF0352 family.

The chain is UPF0352 protein PBPRA2586 from Photobacterium profundum (strain SS9).